The sequence spans 497 residues: Tyrosine-protein kinase SPK-1 (497 aa).

The segment at Met1–Pro25 is disordered. An SH3 domain is found at Pro33–Gly94. An SH2 domain is found at Glu100–Met200. In terms of domain architecture, Protein kinase spans Ile220 to Leu482. ATP contacts are provided by residues Ile226–Val234 and Lys248. Asp342 (proton acceptor) is an active-site residue.

It belongs to the protein kinase superfamily. Tyr protein kinase family.

The catalysed reaction is L-tyrosyl-[protein] + ATP = O-phospho-L-tyrosyl-[protein] + ADP + H(+). The polypeptide is Tyrosine-protein kinase SPK-1 (Girardia tigrina (Planarian)).